Consider the following 688-residue polypeptide: Glycine--tRNA ligase beta subunit (688 aa).

It belongs to the class-II aminoacyl-tRNA synthetase family. As to quaternary structure, tetramer of two alpha and two beta subunits.

It is found in the cytoplasm. The catalysed reaction is tRNA(Gly) + glycine + ATP = glycyl-tRNA(Gly) + AMP + diphosphate. The chain is Glycine--tRNA ligase beta subunit from Listeria monocytogenes serotype 4a (strain HCC23).